The chain runs to 107 residues: U-scoloptoxin(18)-Er1a (107 aa).

Residues 1 to 21 form the signal peptide; sequence MQRFLCLVACSVVLLVLGIVA.

It belongs to the scoloptoxin-18 family. Post-translationally, contains 5 disulfide bonds. Expressed by the venom gland.

It is found in the secreted. The sequence is that of U-scoloptoxin(18)-Er1a from Ethmostigmus rubripes (Giant centipede).